The chain runs to 294 residues: Phosphonoacetaldehyde hydrolase (294 aa).

The active-site Nucleophile is Asp19. Mg(2+) is bound by residues Asp19 and Ala21. Lys60 functions as the Schiff-base intermediate with substrate in the catalytic mechanism. Residue Asp193 participates in Mg(2+) binding.

This sequence belongs to the HAD-like hydrolase superfamily. PhnX family. As to quaternary structure, homodimer. Mg(2+) serves as cofactor.

The catalysed reaction is phosphonoacetaldehyde + H2O = acetaldehyde + phosphate + H(+). Functionally, involved in phosphonate degradation. This is Phosphonoacetaldehyde hydrolase from Hahella chejuensis (strain KCTC 2396).